A 155-amino-acid polypeptide reads, in one-letter code: UPF0178 protein Amet_2995 (155 aa).

Belongs to the UPF0178 family.

In Alkaliphilus metalliredigens (strain QYMF), this protein is UPF0178 protein Amet_2995.